Consider the following 250-residue polypeptide: Leucyl/phenylalanyl-tRNA--protein transferase (250 aa).

The protein belongs to the L/F-transferase family.

It is found in the cytoplasm. It catalyses the reaction N-terminal L-lysyl-[protein] + L-leucyl-tRNA(Leu) = N-terminal L-leucyl-L-lysyl-[protein] + tRNA(Leu) + H(+). It carries out the reaction N-terminal L-arginyl-[protein] + L-leucyl-tRNA(Leu) = N-terminal L-leucyl-L-arginyl-[protein] + tRNA(Leu) + H(+). The catalysed reaction is L-phenylalanyl-tRNA(Phe) + an N-terminal L-alpha-aminoacyl-[protein] = an N-terminal L-phenylalanyl-L-alpha-aminoacyl-[protein] + tRNA(Phe). In terms of biological role, functions in the N-end rule pathway of protein degradation where it conjugates Leu, Phe and, less efficiently, Met from aminoacyl-tRNAs to the N-termini of proteins containing an N-terminal arginine or lysine. This is Leucyl/phenylalanyl-tRNA--protein transferase from Cupriavidus pinatubonensis (strain JMP 134 / LMG 1197) (Cupriavidus necator (strain JMP 134)).